We begin with the raw amino-acid sequence, 229 residues long: Probable coenzyme A transferase subunit alpha (229 aa).

A CoA-binding site is contributed by 26–32 (GGFGGVG).

This sequence belongs to the 3-oxoacid CoA-transferase subunit A family. In terms of assembly, heterodimer of a subunit alpha and a subunit beta.

This is Probable coenzyme A transferase subunit alpha (yodS) from Bacillus subtilis (strain 168).